The primary structure comprises 188 residues: ATP synthase subunit p18, mitochondrial (188 aa).

The N-terminal 18 residues, 1–18 (MMRRVYSPVFCSVAAARF), are a transit peptide targeting the mitochondrion. PPR repeat units follow at residues 36 to 70 (TNTA…PPDI), 75 to 109 (ATLQ…EMQH), and 116 to 146 (NEES…METE).

As to quaternary structure, F-type ATPases have 2 components, F(1) - the catalytic core - and F(o) - the membrane proton channel. F(1) has five subunits: alpha(3), beta(3), gamma(1), delta(1), epsilon(1), plus the additional subunit P18 (Tb427.05.1710) that is not present in F(1)F(o) ATP synthase from metazoa. Subunit P18 (Tb927.5.1710) interacts with the alpha subunit with a 1:1 stoichiometry; the interaction is direct. Subunit gamma is part of the central stalk. F(o) has three main subunits: a, b and c. The trypanosomal ATPase complex contains additional subunits that are not present in the F(1)F(o) ATP synthase from metazoa.

The protein resides in the mitochondrion. Its subcellular location is the mitochondrion inner membrane. Functionally, mitochondrial membrane ATP synthase (F(1)F(o) ATP synthase) produces ATP from ADP in the presence of a proton gradient across the membrane which is generated by electron transport complexes of the respiratory chain. F-type ATPases consist of two structural domains, F(1) - containing the extramembraneous catalytic core, and F(o) - containing the membrane proton channel, linked together by a central stalk and a peripheral stalk. During catalysis, ATP synthesis in the catalytic domain of F(1) is coupled via a rotary mechanism of the central stalk subunits to proton translocation. Subunits alpha and beta form the catalytic core in F(1). Rotation of the central stalk against the surrounding alpha(3)beta(3) subunits leads to hydrolysis of ATP in three separate catalytic sites on the beta subunits. Contrary to the procyclic, insect form that requires F(1)F(o) ATP synthase for ATP synthesis, the bloodstream form relies on ATP hydrolysis by F(1)F(o) ATP synthase to maintain its mitochondrial membrane potential. This is ATP synthase subunit p18, mitochondrial from Trypanosoma brucei brucei.